The chain runs to 408 residues: CinA-like protein (408 aa).

Belongs to the CinA family.

The protein is CinA-like protein of Fervidobacterium nodosum (strain ATCC 35602 / DSM 5306 / Rt17-B1).